The primary structure comprises 164 residues: Phosphopantetheine adenylyltransferase (164 aa).

Substrate is bound at residue Ser-9. Residues 9-10 and His-17 each bind ATP; that span reads SF. The substrate site is built by Lys-41, Leu-73, and Lys-87. ATP is bound by residues 88-90, Glu-98, and 123-129; these read GLR and NSFLSSS.

It belongs to the bacterial CoaD family. Homohexamer. The cofactor is Mg(2+).

Its subcellular location is the cytoplasm. The catalysed reaction is (R)-4'-phosphopantetheine + ATP + H(+) = 3'-dephospho-CoA + diphosphate. Its pathway is cofactor biosynthesis; coenzyme A biosynthesis; CoA from (R)-pantothenate: step 4/5. In terms of biological role, reversibly transfers an adenylyl group from ATP to 4'-phosphopantetheine, yielding dephospho-CoA (dPCoA) and pyrophosphate. This chain is Phosphopantetheine adenylyltransferase, found in Clostridium kluyveri (strain ATCC 8527 / DSM 555 / NBRC 12016 / NCIMB 10680 / K1).